The primary structure comprises 473 residues: UDP-glycosyltransferase 91D2 (473 aa).

H26 acts as the Proton acceptor in catalysis. H26 contacts an anthocyanidin. The active-site Charge relay is D121. Residues A344, Q346, H361, S366, and E369 each contribute to the UDP-alpha-D-glucose site. G384 serves as a coordination point for an anthocyanidin. D385 and Q386 together coordinate UDP-alpha-D-glucose.

This sequence belongs to the UDP-glycosyltransferase family.

It carries out the reaction steviolmonoside + UDP-alpha-D-glucose = steviolbioside + UDP + H(+). The catalysed reaction is rubusoside + UDP-alpha-D-glucose = stevioside + UDP + H(+). The enzyme catalyses stevioside + UDP-alpha-D-glucose = rebaudioside E + UDP + H(+). It catalyses the reaction rebaudioside A + UDP-alpha-D-glucose = rebaudioside D + UDP + H(+). Functionally, involved in the biosynthesis of steviol glycosides in leaves. Converts the mono-glycoside steviolmonoside to the bi-glycoside steviolbioside. Converts the bi-glycoside rubusoside to the tri-glycoside stevioside. Converts the tri-glycoside stevioside to the tetra-glycoside rebaudioside E. Converts the tetra-glycoside rebaudioside A to the penta-glycoside rebaudioside E. This is UDP-glycosyltransferase 91D2 from Stevia rebaudiana (Stevia).